We begin with the raw amino-acid sequence, 496 residues long: Putative BTB/POZ domain and WD-repeat protein R61 (496 aa).

The BTB domain maps to 8 to 78; it reads SNINLILNDE…MFSDIDIYKN (71 aa). WD repeat units follow at residues 149–189, 208–248, 250–285, 291–330, 333–371, and 422–464; these read KFPR…FNSK, IFDN…KEFQ, DYKINDICFSPDGKSCVCANKFLSIYDLDNGRRKVL, KSIGCIKTCVCWTSDNIIACGDSDGVIEFWNAETNLIIKW, VSKSRISNISFSPDRSQIAVSNQTKIILYDSIFDKKILE, and MYFS…DIIY.

Belongs to the mimivirus BTB/WD family.

The sequence is that of Putative BTB/POZ domain and WD-repeat protein R61 from Acanthamoeba polyphaga (Amoeba).